We begin with the raw amino-acid sequence, 709 residues long: Heme/hemopexin utilization protein C (709 aa).

Positions 1–21 are cleaved as a signal peptide; that stretch reads MRFSKLSLAITTTLVTANALA. The region spanning 36-147 is the TBDR plug domain; it reads DPSRFTYTPQ…LGGVVAMRTP (112 aa). The region spanning 158 to 709 is the TBDR beta-barrel domain; it reads KFGVKIRQGY…NAKISAVYSF (552 aa). The TonB C-terminal box motif lies at 692 to 709; it reads SLMEGTGRNAKISAVYSF.

This sequence belongs to the TonB-dependent receptor family.

Its subcellular location is the cell outer membrane. In terms of biological role, required for utilization of free heme at low concentrations. The chain is Heme/hemopexin utilization protein C (hxuC) from Haemophilus influenzae (strain 86-028NP).